A 250-amino-acid chain; its full sequence is Flavin-dependent thymidylate synthase (250 aa).

Residues 7–233 (LRVQLIAKTE…PQVFSDFEIV (227 aa)) form the ThyX domain. FAD contacts are provided by residues S71, 95–97 (RHR), and Q103. Residues 92–95 (ELIR), 103–107 (QLSQR), and R172 contribute to the dUMP site. The ThyX motif signature appears at 95–105 (RHRHFSYSQLS). Residues 188 to 190 (NYR) and H194 contribute to the FAD site. Position 199 (R199) interacts with dUMP. Residue R199 is the Involved in ionization of N3 of dUMP, leading to its activation of the active site.

It belongs to the thymidylate synthase ThyX family. Homotetramer. The cofactor is FAD.

It catalyses the reaction dUMP + (6R)-5,10-methylene-5,6,7,8-tetrahydrofolate + NADPH + H(+) = dTMP + (6S)-5,6,7,8-tetrahydrofolate + NADP(+). It participates in pyrimidine metabolism; dTTP biosynthesis. Its function is as follows. Catalyzes the reductive methylation of 2'-deoxyuridine-5'-monophosphate (dUMP) to 2'-deoxythymidine-5'-monophosphate (dTMP) while utilizing 5,10-methylenetetrahydrofolate (mTHF) as the methyl donor, and NADPH and FADH(2) as the reductant. In Mycolicibacterium vanbaalenii (strain DSM 7251 / JCM 13017 / BCRC 16820 / KCTC 9966 / NRRL B-24157 / PYR-1) (Mycobacterium vanbaalenii), this protein is Flavin-dependent thymidylate synthase.